The following is a 390-amino-acid chain: Succinate--CoA ligase [ADP-forming] subunit beta (390 aa).

The ATP-grasp domain occupies 9–244 (KEIFRKYGVP…LDEEEPTEVE (236 aa)). Residues Lys-46, 53–55 (GRG), Glu-99, Ala-102, and Glu-107 each bind ATP. Asn-199 and Asp-213 together coordinate Mg(2+). Substrate-binding positions include Asn-264 and 321 to 323 (GIV).

The protein belongs to the succinate/malate CoA ligase beta subunit family. In terms of assembly, heterotetramer of two alpha and two beta subunits. Mg(2+) is required as a cofactor.

The catalysed reaction is succinate + ATP + CoA = succinyl-CoA + ADP + phosphate. It catalyses the reaction GTP + succinate + CoA = succinyl-CoA + GDP + phosphate. Its pathway is carbohydrate metabolism; tricarboxylic acid cycle; succinate from succinyl-CoA (ligase route): step 1/1. Its function is as follows. Succinyl-CoA synthetase functions in the citric acid cycle (TCA), coupling the hydrolysis of succinyl-CoA to the synthesis of either ATP or GTP and thus represents the only step of substrate-level phosphorylation in the TCA. The beta subunit provides nucleotide specificity of the enzyme and binds the substrate succinate, while the binding sites for coenzyme A and phosphate are found in the alpha subunit. In Nautilia profundicola (strain ATCC BAA-1463 / DSM 18972 / AmH), this protein is Succinate--CoA ligase [ADP-forming] subunit beta.